We begin with the raw amino-acid sequence, 138 residues long: Large-conductance mechanosensitive channel (138 aa).

3 helical membrane-spanning segments follow: residues 19-39, 40-60, and 81-101; these read VGVI…GDVI, MPVI…IGLS, and GSFL…FIVI.

Belongs to the MscL family. Homopentamer.

The protein resides in the cell inner membrane. In terms of biological role, channel that opens in response to stretch forces in the membrane lipid bilayer. May participate in the regulation of osmotic pressure changes within the cell. The sequence is that of Large-conductance mechanosensitive channel from Afipia carboxidovorans (strain ATCC 49405 / DSM 1227 / KCTC 32145 / OM5) (Oligotropha carboxidovorans).